We begin with the raw amino-acid sequence, 150 residues long: Allograft inflammatory factor 1-like (150 aa).

Ser-2 carries the N-acetylserine modification. Phosphoserine is present on Ser-2. The EF-hand 1 domain maps to 47–82 (EKLTAFKEKYMEFDLNNEGEIDLMSLKRMMEKLGVP). Positions 60, 62, 64, and 66 each coordinate Ca(2+). Residues 83–117 (KTHLEMKKMISEVTGGVSDTISYRDFVNMMLGKRS) form the EF-hand 2; degenerate domain. Residues 129–150 (KANESSPKPVGPPPERDIASLP) are disordered. Position 134 is a phosphoserine (Ser-134).

Homodimer (Potential). Monomer.

The protein resides in the cytoplasm. The protein localises to the cytoskeleton. Its subcellular location is the cell projection. It localises to the ruffle membrane. Functionally, actin-binding protein that promotes actin bundling. May neither bind calcium nor depend on calcium for function. The chain is Allograft inflammatory factor 1-like (AIF1L) from Homo sapiens (Human).